A 520-amino-acid polypeptide reads, in one-letter code: Glutamate--cysteine ligase (520 aa).

This sequence belongs to the glutamate--cysteine ligase type 1 family. Type 1 subfamily.

It catalyses the reaction L-cysteine + L-glutamate + ATP = gamma-L-glutamyl-L-cysteine + ADP + phosphate + H(+). The protein operates within sulfur metabolism; glutathione biosynthesis; glutathione from L-cysteine and L-glutamate: step 1/2. The sequence is that of Glutamate--cysteine ligase from Serratia proteamaculans (strain 568).